We begin with the raw amino-acid sequence, 317 residues long: Phosphatidylglycerol--prolipoprotein diacylglyceryl transferase 2 (317 aa).

A run of 4 helical transmembrane segments spans residues 19–39, 51–71, 93–113, and 120–140; these read IPLR…VWLG, GVIA…GRLY, VWEG…GAWI, and IPLP…QAIG. Arginine 141 contributes to the a 1,2-diacyl-sn-glycero-3-phospho-(1'-sn-glycerol) binding site. 3 helical membrane passes run 180-200, 211-230, and 241-261; these read PTFL…LWAA, FALY…YLRI, and LNNW…VVSA. The disordered stretch occupies residues 275 to 317; sequence GAGADGRTDDPRPADASVGLASGPPGNSTPRRATESWNVRNRS. Positions 299–317 are enriched in polar residues; it reads PGNSTPRRATESWNVRNRS.

This sequence belongs to the Lgt family.

It localises to the cell membrane. The catalysed reaction is L-cysteinyl-[prolipoprotein] + a 1,2-diacyl-sn-glycero-3-phospho-(1'-sn-glycerol) = an S-1,2-diacyl-sn-glyceryl-L-cysteinyl-[prolipoprotein] + sn-glycerol 1-phosphate + H(+). The protein operates within protein modification; lipoprotein biosynthesis (diacylglyceryl transfer). Catalyzes the transfer of the diacylglyceryl group from phosphatidylglycerol to the sulfhydryl group of the N-terminal cysteine of a prolipoprotein, the first step in the formation of mature lipoproteins. The sequence is that of Phosphatidylglycerol--prolipoprotein diacylglyceryl transferase 2 from Streptomyces coelicolor (strain ATCC BAA-471 / A3(2) / M145).